The chain runs to 271 residues: 4-hydroxy-tetrahydrodipicolinate reductase (271 aa).

Residues 10-15, Glu36, 100-102, and 124-127 each bind NAD(+); these read GAGGRM, GTT, and SGNM. His157 functions as the Proton donor/acceptor in the catalytic mechanism. Residue His158 participates in (S)-2,3,4,5-tetrahydrodipicolinate binding. Lys161 (proton donor) is an active-site residue. Residue 167–168 coordinates (S)-2,3,4,5-tetrahydrodipicolinate; the sequence is GT.

This sequence belongs to the DapB family.

The protein localises to the cytoplasm. The catalysed reaction is (S)-2,3,4,5-tetrahydrodipicolinate + NAD(+) + H2O = (2S,4S)-4-hydroxy-2,3,4,5-tetrahydrodipicolinate + NADH + H(+). The enzyme catalyses (S)-2,3,4,5-tetrahydrodipicolinate + NADP(+) + H2O = (2S,4S)-4-hydroxy-2,3,4,5-tetrahydrodipicolinate + NADPH + H(+). It participates in amino-acid biosynthesis; L-lysine biosynthesis via DAP pathway; (S)-tetrahydrodipicolinate from L-aspartate: step 4/4. Its function is as follows. Catalyzes the conversion of 4-hydroxy-tetrahydrodipicolinate (HTPA) to tetrahydrodipicolinate. This Rhodopseudomonas palustris (strain ATCC BAA-98 / CGA009) protein is 4-hydroxy-tetrahydrodipicolinate reductase.